The chain runs to 112 residues: MVFLREKEGPSGGSGRRIILWPAYFDSTLPRRLGRRVPRDMGVPSPKPEDVAEAARRAGFEAVVEESSYPRLWWRVRRRIVVLAPEDVSKTDIIKAVATELRKIAAARRKRS.

It belongs to the SRP19 family. As to quaternary structure, part of the signal recognition particle protein translocation system, which is composed of SRP and FtsY. Archaeal SRP consists of a 7S RNA molecule of 300 nucleotides and two protein subunits: SRP54 and SRP19.

It is found in the cytoplasm. Its function is as follows. Involved in targeting and insertion of nascent membrane proteins into the cytoplasmic membrane. Binds directly to 7S RNA and mediates binding of the 54 kDa subunit of the SRP. In Aeropyrum pernix (strain ATCC 700893 / DSM 11879 / JCM 9820 / NBRC 100138 / K1), this protein is Signal recognition particle 19 kDa protein.